The primary structure comprises 517 residues: Protein translocase subunit SecD (517 aa).

6 helical membrane passes run 5–25, 357–377, 380–400, 407–427, 455–475, and 479–499; these read LRWITILIVFVVSLFFMFPLD, IWAGIIGVAAVIIFMLIYYKF, FIASIALLSNAIIILGAMGMF, PGIAGLILTMGMAIDANVLIF, IIDSNITTLIAGLVLFQFGTG, and GFAVTLTIGILSSIFTAVTLS.

The protein belongs to the SecD/SecF family. SecD subfamily. In terms of assembly, forms a complex with SecF. Part of the essential Sec protein translocation apparatus which comprises SecA, SecYEG and auxiliary proteins SecDF. Other proteins may also be involved.

The protein resides in the cell inner membrane. Its function is as follows. Part of the Sec protein translocase complex. Interacts with the SecYEG preprotein conducting channel. SecDF uses the proton motive force (PMF) to complete protein translocation after the ATP-dependent function of SecA. The polypeptide is Protein translocase subunit SecD (Calditerrivibrio nitroreducens (strain DSM 19672 / NBRC 101217 / Yu37-1)).